The chain runs to 91 residues: Small ribosomal subunit protein uS17 (91 aa).

Belongs to the universal ribosomal protein uS17 family. As to quaternary structure, part of the 30S ribosomal subunit.

One of the primary rRNA binding proteins, it binds specifically to the 5'-end of 16S ribosomal RNA. The chain is Small ribosomal subunit protein uS17 from Saccharopolyspora erythraea (strain ATCC 11635 / DSM 40517 / JCM 4748 / NBRC 13426 / NCIMB 8594 / NRRL 2338).